We begin with the raw amino-acid sequence, 283 residues long: Thymidylate synthase (283 aa).

Arg-22 serves as a coordination point for dUMP. Catalysis depends on Cys-160, which acts as the Nucleophile. DUMP contacts are provided by residues 180–183, Asn-191, and 221–223; these read RSCD and HIY. Asp-183 serves as a coordination point for (6R)-5,10-methylene-5,6,7,8-tetrahydrofolate. Ser-282 lines the (6R)-5,10-methylene-5,6,7,8-tetrahydrofolate pocket.

Belongs to the thymidylate synthase family. Bacterial-type ThyA subfamily. Homodimer.

It is found in the cytoplasm. The enzyme catalyses dUMP + (6R)-5,10-methylene-5,6,7,8-tetrahydrofolate = 7,8-dihydrofolate + dTMP. It functions in the pathway pyrimidine metabolism; dTTP biosynthesis. Functionally, catalyzes the reductive methylation of 2'-deoxyuridine-5'-monophosphate (dUMP) to 2'-deoxythymidine-5'-monophosphate (dTMP) while utilizing 5,10-methylenetetrahydrofolate (mTHF) as the methyl donor and reductant in the reaction, yielding dihydrofolate (DHF) as a by-product. This enzymatic reaction provides an intracellular de novo source of dTMP, an essential precursor for DNA biosynthesis. In Marinomonas sp. (strain MWYL1), this protein is Thymidylate synthase.